The sequence spans 717 residues: Fatty acid oxidation complex subunit alpha (717 aa).

The enoyl-CoA hydratase/isomerase stretch occupies residues 1-190 (MIHAGNAITV…KDGAVDAVVA (190 aa)). Asp-298 contacts substrate. The 3-hydroxyacyl-CoA dehydrogenase stretch occupies residues 313–717 (HPVNQAAVLG…MAANNKKFYG (405 aa)). NAD(+)-binding positions include Met-326, Asp-345, 402–404 (VTE), Lys-409, and Ser-431. Catalysis depends on His-452, which acts as the For 3-hydroxyacyl-CoA dehydrogenase activity. Asn-455 is a binding site for NAD(+). A substrate-binding site is contributed by Asn-502.

In the N-terminal section; belongs to the enoyl-CoA hydratase/isomerase family. The protein in the C-terminal section; belongs to the 3-hydroxyacyl-CoA dehydrogenase family. As to quaternary structure, heterotetramer of two alpha chains (FadB) and two beta chains (FadA).

The enzyme catalyses a (3S)-3-hydroxyacyl-CoA + NAD(+) = a 3-oxoacyl-CoA + NADH + H(+). It catalyses the reaction a (3S)-3-hydroxyacyl-CoA = a (2E)-enoyl-CoA + H2O. It carries out the reaction a 4-saturated-(3S)-3-hydroxyacyl-CoA = a (3E)-enoyl-CoA + H2O. The catalysed reaction is (3S)-3-hydroxybutanoyl-CoA = (3R)-3-hydroxybutanoyl-CoA. The enzyme catalyses a (3Z)-enoyl-CoA = a 4-saturated (2E)-enoyl-CoA. It catalyses the reaction a (3E)-enoyl-CoA = a 4-saturated (2E)-enoyl-CoA. Its pathway is lipid metabolism; fatty acid beta-oxidation. Functionally, involved in the aerobic and anaerobic degradation of long-chain fatty acids via beta-oxidation cycle. Catalyzes the formation of 3-oxoacyl-CoA from enoyl-CoA via L-3-hydroxyacyl-CoA. It can also use D-3-hydroxyacyl-CoA and cis-3-enoyl-CoA as substrate. This Acinetobacter baumannii (strain SDF) protein is Fatty acid oxidation complex subunit alpha.